The sequence spans 188 residues: MFLIVGLGNPGKEYEHTRHNVGFDIIDVISEKYNIDLNKKKFKGMYGDGTIANEKVILLKPLTYMNLSGESIKEVTDFYKIPKENVIVIYDDISLEVGRMRIREKGSAGGHNGIKNIIAHFGSDVFPRIKVGVGQPVQRDLVSHVLGKFNKDDREILSKVFEAASDAAENIIEKGTAEAMNKFNGFKA.

Tyrosine 14 contacts tRNA. The Proton acceptor role is filled by histidine 19. Residues tyrosine 64, asparagine 66, and asparagine 112 each contribute to the tRNA site.

It belongs to the PTH family. Monomer.

The protein resides in the cytoplasm. The catalysed reaction is an N-acyl-L-alpha-aminoacyl-tRNA + H2O = an N-acyl-L-amino acid + a tRNA + H(+). In terms of biological role, hydrolyzes ribosome-free peptidyl-tRNAs (with 1 or more amino acids incorporated), which drop off the ribosome during protein synthesis, or as a result of ribosome stalling. Functionally, catalyzes the release of premature peptidyl moieties from peptidyl-tRNA molecules trapped in stalled 50S ribosomal subunits, and thus maintains levels of free tRNAs and 50S ribosomes. This chain is Peptidyl-tRNA hydrolase, found in Clostridium novyi (strain NT).